The following is a 328-amino-acid chain: DNA-directed RNA polymerase subunit alpha (328 aa).

The tract at residues methionine 1–serine 231 is alpha N-terminal domain (alpha-NTD). The interval methionine 252–glutamine 328 is alpha C-terminal domain (alpha-CTD).

Belongs to the RNA polymerase alpha chain family. Homodimer. The RNAP catalytic core consists of 2 alpha, 1 beta, 1 beta' and 1 omega subunit. When a sigma factor is associated with the core the holoenzyme is formed, which can initiate transcription.

The catalysed reaction is RNA(n) + a ribonucleoside 5'-triphosphate = RNA(n+1) + diphosphate. Its function is as follows. DNA-dependent RNA polymerase catalyzes the transcription of DNA into RNA using the four ribonucleoside triphosphates as substrates. The sequence is that of DNA-directed RNA polymerase subunit alpha from Chloroherpeton thalassium (strain ATCC 35110 / GB-78).